The sequence spans 428 residues: Septin homolog spn7 (428 aa).

A Septin-type G domain is found at 15-290; it reads KGKKLRIMVA…ENYRTEKLSN (276 aa). The segment at 25 to 32 is G1 motif; sequence GSSYTSYQ. GTP contacts are provided by residues 25-32, G86, 166-174, and G224; these read GSSYTSYQ and NSNAFTEEE. The interval 83–86 is G3 motif; sequence EVNG. A G4 motif region spans residues 165 to 168; that stretch reads GNSN. Disordered regions lie at residues 287 to 345 and 387 to 414; these read KLSN…SEEL and KEFPHRTTSSRNSLPNNTTKELEMKKMD. Residues 290 to 307 show a composition bias toward polar residues; it reads NDSPSNTSLSLQKQNSIV. Positions 309-325 are enriched in basic and acidic residues; that stretch reads NEDKRSVNGSERTETRS. Composition is skewed to polar residues over residues 326–339 and 392–405; these read SIDQSEMRTNVSDS and RTTSSRNSLPNNTT.

Belongs to the TRAFAC class TrmE-Era-EngA-EngB-Septin-like GTPase superfamily. Septin GTPase family. As to quaternary structure, component of the sporulation-specific septin complex composed of at least spn2, spn5, spn6 and spn7.

The protein resides in the cytoplasm. It localises to the nucleus. The protein localises to the forespore membrane. Septin-like protein involved in the correct orientation of forespore membrane extension during sporulation. Binds phosphatidylinositol 4-phosphate. This Schizosaccharomyces pombe (strain 972 / ATCC 24843) (Fission yeast) protein is Septin homolog spn7 (spn7).